We begin with the raw amino-acid sequence, 476 residues long: MRVLHVCSELFPLLKTGGLADVIGALPAAQLAEGADVRIILPAFPDLRRGIPETVLVREIDTFAGRVALRYGHYRGIGIYLIDAPALYDRAGSPYHDASLYAYSDNYLRFALLGWMACELACGLDGYWRPEVVHAHDWHAGLTCAYLAARGRPARSVFTVHNLAYQGLFSADHLSELHLPAEFFQIYGLEFYGQISYLKAGLFFADHVTTVSPTYAKEITQPAFGYGMEGLLQALARQGRLTGILNGVDSDIWDPQSDTLLPTRYDAENLQAKAINKTHLQTAMGLQLAENKPIFAVVSRLTVQKGLDLVLEALPELLALGGQLVVLGSGDATLQEAFLAAAAEHSGQVGVQIGYHEAFSHRIIAGSDVILVPSRFEPCGLTQLYGLKYGTLPLVRHTGGLADTVVDCALENLADGSASGFVFNECEAQALVKAIRRAFVLWSRPKHWRHVQRHAMRLDFGWQLAAVDYLSLYRRL.

K15 contributes to the ADP-alpha-D-glucose binding site.

This sequence belongs to the glycosyltransferase 1 family. Bacterial/plant glycogen synthase subfamily.

It catalyses the reaction [(1-&gt;4)-alpha-D-glucosyl](n) + ADP-alpha-D-glucose = [(1-&gt;4)-alpha-D-glucosyl](n+1) + ADP + H(+). It participates in glycan biosynthesis; glycogen biosynthesis. Its function is as follows. Synthesizes alpha-1,4-glucan chains using ADP-glucose. This is Glycogen synthase from Yersinia pestis bv. Antiqua (strain Antiqua).